Here is a 483-residue protein sequence, read N- to C-terminus: Ero1-like protein (483 aa).

The first 29 residues, 1 to 29 (MTTRTVQRNLWASAAVVLVLLLLWTDTTG), serve as a signal peptide directing secretion. 6 disulfides stabilise this stretch: cysteine 44-cysteine 57, cysteine 46-cysteine 55, cysteine 94-cysteine 402, cysteine 103-cysteine 108, cysteine 227-cysteine 251, and cysteine 405-cysteine 408. FAD is bound by residues arginine 206, threonine 208, and tryptophan 219. Residue asparagine 232 is glycosylated (N-linked (GlcNAc...) asparagine). Serine 262, histidine 265, and arginine 301 together coordinate FAD. An N-linked (GlcNAc...) asparagine glycan is attached at asparagine 395.

This sequence belongs to the EROs family. May function both as a monomer and a homodimer. Requires FAD as cofactor.

It is found in the endoplasmic reticulum membrane. Its function is as follows. Oxidoreductase involved in disulfide bond formation in the endoplasmic reticulum. Efficiently reoxidizes pdi-1, the enzyme catalyzing protein disulfide formation, in order to allow pdi-1 to sustain additional rounds of disulfide formation. Following pdi reoxidation, passes its electrons to molecular oxygen via FAD, leading to the production of reactive oxygen species (ROS) in the cell. This Drosophila melanogaster (Fruit fly) protein is Ero1-like protein (Ero1L).